A 706-amino-acid chain; its full sequence is Choline transporter-like protein 2 (706 aa).

The Cytoplasmic portion of the chain corresponds to 1-33 (MGKDSQNYYGKHGTPQKYDPTFKGPIYNRGCTD). T14 is subject to Phosphothreonine. Residues 34 to 54 (VICCVLLFLAIVGYVAVGIIA) traverse the membrane as a helical segment. The Extracellular segment spans residues 55 to 232 (WTHGDPRKVI…QIFEDYTVSW (178 aa)). Residues N187 and N200 are each glycosylated (N-linked (GlcNAc...) asparagine). The chain crosses the membrane as a helical span at residues 233–253 (YWIIIGLVIAMVLSLLFIVLL). The Cytoplasmic segment spans residues 254–256 (RFL). Residues 257 to 277 (AGIMVWVMIVMVILVLGYGIF) form a helical membrane-spanning segment. Residues 278–315 (HCYMEYSRLRGEAGSDVSLVDLGFQTDLRVYLHLRQTW) lie on the Extracellular side of the membrane. A helical membrane pass occupies residues 316-336 (MAFMIILSILEVVIILLLIFL). Residues 337–364 (RKRILIAIALIKEASRAVGHVMCSLLYP) lie on the Cytoplasmic side of the membrane. A helical transmembrane segment spans residues 365–385 (LVTFFLLCLCIAYWASTSVFL). Residues 386–454 (STSNTAVYKV…LQIFNAFMFF (69 aa)) lie on the Extracellular side of the membrane. N417 carries an N-linked (GlcNAc...) asparagine glycan. A helical membrane pass occupies residues 455-477 (WLANFVLALGQVTLAGAFASYYW). Residues 478–504 (AMRKPDDMPAFPLFSAFGRALRYHTGS) lie on the Cytoplasmic side of the membrane. Residues 505-525 (LAFGSLILAIVQIIRVMLEYL) form a helical membrane-spanning segment. Residues 526 to 563 (DQRLKAAQNKFAKFLMVCLKCCFWCLEKFIKFLNRNAY) lie on the Extracellular side of the membrane. A helical transmembrane segment spans residues 564-584 (IMIAIYGTNFCTSARNAFFLL). Topologically, residues 585–599 (MRNIIRVAVLDKVTD) are cytoplasmic. Residues 600-620 (FLFLLGKLLIVGSVGILAFFF) form a helical membrane-spanning segment. At 621–638 (FTHRIRIVQDTAPPLNYY) the chain is on the extracellular side. Residues 639–659 (WVPILTVIIGSYLIAHGFFSV) form a helical membrane-spanning segment. The Cytoplasmic portion of the chain corresponds to 660–706 (YGMCVDTLFLCFLEDLERNDGSAERPYFMSSTLKKLLNKTNKKVAES).

The protein belongs to the CTL (choline transporter-like) family. As to quaternary structure, interacts with COCH. Glycosylated, glycosylation differs from tissue to tissue. The molecular mass of the mature glycosylated protein is highest in kidney, followed by lung, colon and spleen, then brain and tongue. In terms of tissue distribution, expressed at high levels in lung, colon, inner ear and spleen (at protein level). Progressively lower levels in brain, tongue, liver and kidney (at protein level). In the kidney, prominent expression in glomeruli in the lining of Bowman's capsule and on the mesangial cells adjacent to the vessels within the glomerulus (at protein level). Strongly expressed on the membranes of splenocytes and in lung parenchyme (at protein level). Expressed at higher levels than isoform 2 in colon, heart, kidney, lung, cochlea, tongue and muscle, as well as in the inner ear. As to expression, predominantly expressed in brain, liver and spleen.

The protein localises to the cell membrane. Its subcellular location is the mitochondrion outer membrane. It catalyses the reaction choline(out) + n H(+)(in) = choline(in) + n H(+)(out). The enzyme catalyses ethanolamine(out) + n H(+)(in) = ethanolamine(in) + n H(+)(out). In terms of biological role, choline/H+ antiporter, mainly in mitochodria. Also acts as a low-affinity ethanolamine/H+ antiporter, regulating the supply of extracellular ethanolamine (Etn) for the CDP-Etn pathway, redistribute intracellular Etn and balance the CDP-Cho and CDP-Etn arms of the Kennedy pathway. The polypeptide is Choline transporter-like protein 2 (Slc44a2) (Mus musculus (Mouse)).